The sequence spans 220 residues: 7-cyano-7-deazaguanine synthase (220 aa).

ATP is bound at residue 10-20 (FSGGQDSTTCL). Cys-186, Cys-195, Cys-198, and Cys-201 together coordinate Zn(2+).

Belongs to the QueC family. In terms of assembly, homodimer. The cofactor is Zn(2+).

The enzyme catalyses 7-carboxy-7-deazaguanine + NH4(+) + ATP = 7-cyano-7-deazaguanine + ADP + phosphate + H2O + H(+). Its pathway is purine metabolism; 7-cyano-7-deazaguanine biosynthesis. Functionally, catalyzes the ATP-dependent conversion of 7-carboxy-7-deazaguanine (CDG) to 7-cyano-7-deazaguanine (preQ(0)). The chain is 7-cyano-7-deazaguanine synthase from Bacillus cereus (strain AH187).